The chain runs to 614 residues: UvrABC system protein C (614 aa).

The 79-residue stretch at 26–104 (NLPGVYKMLG…IKEYRPPYNV (79 aa)) folds into the GIY-YIG domain. One can recognise a UVR domain in the interval 215–250 (SDIHSALIEKMEASAEELDFEKAVFYRDQLSMLREV).

This sequence belongs to the UvrC family. In terms of assembly, interacts with UvrB in an incision complex.

Its subcellular location is the cytoplasm. Functionally, the UvrABC repair system catalyzes the recognition and processing of DNA lesions. UvrC both incises the 5' and 3' sides of the lesion. The N-terminal half is responsible for the 3' incision and the C-terminal half is responsible for the 5' incision. This is UvrABC system protein C from Psychrobacter arcticus (strain DSM 17307 / VKM B-2377 / 273-4).